Reading from the N-terminus, the 215-residue chain is Pyrrolidone-carboxylate peptidase (215 aa).

Catalysis depends on residues Glu-78, Cys-141, and His-165.

It belongs to the peptidase C15 family. As to quaternary structure, homotetramer.

It is found in the cytoplasm. It catalyses the reaction Release of an N-terminal pyroglutamyl group from a polypeptide, the second amino acid generally not being Pro.. Its function is as follows. Removes 5-oxoproline from various penultimate amino acid residues except L-proline. The polypeptide is Pyrrolidone-carboxylate peptidase (Streptococcus pyogenes serotype M18 (strain MGAS8232)).